Reading from the N-terminus, the 290-residue chain is Elongation factor Ts (290 aa).

The segment at 81–84 (TDFV) is involved in Mg(2+) ion dislocation from EF-Tu.

The protein belongs to the EF-Ts family.

It localises to the cytoplasm. Its function is as follows. Associates with the EF-Tu.GDP complex and induces the exchange of GDP to GTP. It remains bound to the aminoacyl-tRNA.EF-Tu.GTP complex up to the GTP hydrolysis stage on the ribosome. The chain is Elongation factor Ts from Saccharophagus degradans (strain 2-40 / ATCC 43961 / DSM 17024).